The sequence spans 478 residues: Aspartate ammonia-lyase (478 aa).

L-aspartate contacts are provided by threonine 104, serine 143, threonine 144, asparagine 145, and threonine 190. Residues 320–329 (GSSIMPAKVN) form an SS loop region. The active-site Proton acceptor is serine 321. L-aspartate contacts are provided by serine 322 and lysine 327.

The protein belongs to the class-II fumarase/aspartase family. Aspartase subfamily. As to quaternary structure, homotetramer.

The enzyme catalyses L-aspartate = fumarate + NH4(+). Its function is as follows. Catalyzes the reversible conversion of L-aspartate to fumarate and ammonia. This chain is Aspartate ammonia-lyase (aspA), found in Escherichia coli O157:H7.